Reading from the N-terminus, the 284-residue chain is 2-dehydro-3-deoxyphosphooctonate aldolase (284 aa).

This sequence belongs to the KdsA family.

The protein localises to the cytoplasm. The catalysed reaction is D-arabinose 5-phosphate + phosphoenolpyruvate + H2O = 3-deoxy-alpha-D-manno-2-octulosonate-8-phosphate + phosphate. Its pathway is carbohydrate biosynthesis; 3-deoxy-D-manno-octulosonate biosynthesis; 3-deoxy-D-manno-octulosonate from D-ribulose 5-phosphate: step 2/3. The protein operates within bacterial outer membrane biogenesis; lipopolysaccharide biosynthesis. The polypeptide is 2-dehydro-3-deoxyphosphooctonate aldolase (Salmonella paratyphi A (strain ATCC 9150 / SARB42)).